The chain runs to 300 residues: Cation-efflux pump FieF (300 aa).

4 consecutive transmembrane segments (helical) span residues Ala12 to Trp32, Ile39 to Val59, Ala82 to Ile102, and Pro114 to Phe134. Residues Asp45 and Asp49 each contribute to the Zn(2+) site. Zn(2+)-binding residues include His153 and Asp157. Residues Ile164–Leu184 form a helical membrane-spanning segment.

Belongs to the cation diffusion facilitator (CDF) transporter (TC 2.A.4) family. FieF subfamily. As to quaternary structure, homodimer.

The protein resides in the cell inner membrane. It catalyses the reaction Zn(2+)(in) + H(+)(out) = Zn(2+)(out) + H(+)(in). It carries out the reaction Cd(2+)(in) + H(+)(out) = Cd(2+)(out) + H(+)(in). The catalysed reaction is Fe(2+)(in) + H(+)(out) = Fe(2+)(out) + H(+)(in). Divalent metal cation transporter which exports Zn(2+), Cd(2+) and possibly Fe(2+). May be involved in zinc and iron detoxification by efflux. The protein is Cation-efflux pump FieF of Citrobacter koseri (strain ATCC BAA-895 / CDC 4225-83 / SGSC4696).